The chain runs to 307 residues: Homoserine O-acetyltransferase (307 aa).

Cys142 (acyl-thioester intermediate) is an active-site residue. Substrate is bound by residues Lys163 and Ser192. His235 acts as the Proton acceptor in catalysis. Residue Glu237 is part of the active site. Arg249 is a substrate binding site.

It belongs to the MetA family.

It is found in the cytoplasm. The catalysed reaction is L-homoserine + acetyl-CoA = O-acetyl-L-homoserine + CoA. It functions in the pathway amino-acid biosynthesis; L-methionine biosynthesis via de novo pathway; O-acetyl-L-homoserine from L-homoserine: step 1/1. Its function is as follows. Transfers an acetyl group from acetyl-CoA to L-homoserine, forming acetyl-L-homoserine. This Desulfitobacterium hafniense (strain DSM 10664 / DCB-2) protein is Homoserine O-acetyltransferase.